The chain runs to 461 residues: tRNA-2-methylthio-N(6)-dimethylallyladenosine synthase (461 aa).

The MTTase N-terminal domain occupies 25–143 (PTYSIITHGC…LPYLIDRHLS (119 aa)). Residues Cys-34, Cys-70, Cys-104, Cys-179, Cys-183, and Cys-186 each contribute to the [4Fe-4S] cluster site. Residues 165–395 (RDNEYVGYVN…LDVAYPIFYE (231 aa)) enclose the Radical SAM core domain. The region spanning 398-461 (KSYLGTIQEV…SFALTGEMVD (64 aa)) is the TRAM domain.

The protein belongs to the methylthiotransferase family. MiaB subfamily. As to quaternary structure, monomer. The cofactor is [4Fe-4S] cluster.

It is found in the cytoplasm. The enzyme catalyses N(6)-dimethylallyladenosine(37) in tRNA + (sulfur carrier)-SH + AH2 + 2 S-adenosyl-L-methionine = 2-methylsulfanyl-N(6)-dimethylallyladenosine(37) in tRNA + (sulfur carrier)-H + 5'-deoxyadenosine + L-methionine + A + S-adenosyl-L-homocysteine + 2 H(+). Its function is as follows. Catalyzes the methylthiolation of N6-(dimethylallyl)adenosine (i(6)A), leading to the formation of 2-methylthio-N6-(dimethylallyl)adenosine (ms(2)i(6)A) at position 37 in tRNAs that read codons beginning with uridine. In Finegoldia magna (strain ATCC 29328 / DSM 20472 / WAL 2508) (Peptostreptococcus magnus), this protein is tRNA-2-methylthio-N(6)-dimethylallyladenosine synthase.